A 95-amino-acid polypeptide reads, in one-letter code: Aspartyl/glutamyl-tRNA(Asn/Gln) amidotransferase subunit C (95 aa).

It belongs to the GatC family. Heterotrimer of A, B and C subunits.

It catalyses the reaction L-glutamyl-tRNA(Gln) + L-glutamine + ATP + H2O = L-glutaminyl-tRNA(Gln) + L-glutamate + ADP + phosphate + H(+). The catalysed reaction is L-aspartyl-tRNA(Asn) + L-glutamine + ATP + H2O = L-asparaginyl-tRNA(Asn) + L-glutamate + ADP + phosphate + 2 H(+). Its function is as follows. Allows the formation of correctly charged Asn-tRNA(Asn) or Gln-tRNA(Gln) through the transamidation of misacylated Asp-tRNA(Asn) or Glu-tRNA(Gln) in organisms which lack either or both of asparaginyl-tRNA or glutaminyl-tRNA synthetases. The reaction takes place in the presence of glutamine and ATP through an activated phospho-Asp-tRNA(Asn) or phospho-Glu-tRNA(Gln). This chain is Aspartyl/glutamyl-tRNA(Asn/Gln) amidotransferase subunit C, found in Geobacter sulfurreducens (strain ATCC 51573 / DSM 12127 / PCA).